Consider the following 205-residue polypeptide: Small ribosomal subunit protein uS4 (205 aa).

A compositionally biased stretch (basic residues) spans 1 to 12; sequence MSKRVQAKHKLD. The disordered stretch occupies residues 1–49; sequence MSKRVQAKHKLDRRMGQNIWGRPKSPVNRREYGPGQHGQRRKGKMSDFG. The S4 RNA-binding domain occupies 94 to 155; the sequence is RRLDAVVYRS…ASRQLEIVVV (62 aa).

Belongs to the universal ribosomal protein uS4 family. Part of the 30S ribosomal subunit. Contacts protein S5. The interaction surface between S4 and S5 is involved in control of translational fidelity.

Its function is as follows. One of the primary rRNA binding proteins, it binds directly to 16S rRNA where it nucleates assembly of the body of the 30S subunit. With S5 and S12 plays an important role in translational accuracy. The chain is Small ribosomal subunit protein uS4 from Methylorubrum extorquens (strain CM4 / NCIMB 13688) (Methylobacterium extorquens).